Consider the following 399-residue polypeptide: DNA primase DnaG (399 aa).

The Toprim domain maps to 182–268; the sequence is DAIIVVEGRA…EVEDLTQKEI (87 aa). Residues Glu-188, Asp-230, and Asp-232 each contribute to the Mg(2+) site.

This sequence belongs to the archaeal DnaG primase family. In terms of assembly, forms a ternary complex with MCM helicase and DNA. Component of the archaeal exosome complex. Requires Mg(2+) as cofactor.

It carries out the reaction ssDNA + n NTP = ssDNA/pppN(pN)n-1 hybrid + (n-1) diphosphate.. Functionally, RNA polymerase that catalyzes the synthesis of short RNA molecules used as primers for DNA polymerase during DNA replication. Also part of the exosome, which is a complex involved in RNA degradation. Acts as a poly(A)-binding protein that enhances the interaction between heteromeric, adenine-rich transcripts and the exosome. This Archaeoglobus fulgidus (strain ATCC 49558 / DSM 4304 / JCM 9628 / NBRC 100126 / VC-16) protein is DNA primase DnaG.